The sequence spans 143 residues: Deoxyuridine 5'-triphosphate nucleotidohydrolase (143 aa).

This sequence belongs to the dUTPase family. Mg(2+) is required as a cofactor.

It catalyses the reaction dUTP + H2O = dUMP + diphosphate + H(+). This enzyme is involved in nucleotide metabolism: it produces dUMP, the immediate precursor of thymidine nucleotides and it decreases the intracellular concentration of dUTP so that uracil cannot be incorporated into DNA. The chain is Deoxyuridine 5'-triphosphate nucleotidohydrolase (DUT) from Yaba monkey tumor virus (strain VR587) (YMTV).